The sequence spans 245 residues: tRNA pseudouridine synthase A (245 aa).

Catalysis depends on aspartate 52, which acts as the Nucleophile. Residue tyrosine 111 participates in substrate binding.

Belongs to the tRNA pseudouridine synthase TruA family. As to quaternary structure, homodimer.

The enzyme catalyses uridine(38/39/40) in tRNA = pseudouridine(38/39/40) in tRNA. Functionally, formation of pseudouridine at positions 38, 39 and 40 in the anticodon stem and loop of transfer RNAs. The chain is tRNA pseudouridine synthase A from Thermotoga petrophila (strain ATCC BAA-488 / DSM 13995 / JCM 10881 / RKU-1).